Reading from the N-terminus, the 100-residue chain is Large ribosomal subunit protein uL23 (100 aa).

This sequence belongs to the universal ribosomal protein uL23 family. As to quaternary structure, part of the 50S ribosomal subunit. Contacts protein L29, and trigger factor when it is bound to the ribosome.

One of the early assembly proteins it binds 23S rRNA. One of the proteins that surrounds the polypeptide exit tunnel on the outside of the ribosome. Forms the main docking site for trigger factor binding to the ribosome. This chain is Large ribosomal subunit protein uL23, found in Shewanella piezotolerans (strain WP3 / JCM 13877).